Here is a 340-residue protein sequence, read N- to C-terminus: 4-hydroxy-2-oxovalerate aldolase (340 aa).

In terms of domain architecture, Pyruvate carboxyltransferase spans 5 to 255 (IVITEVALRD…QTGVDLYKMM (251 aa)). 13–14 (RD) is a substrate binding site. Mn(2+) is bound at residue Asp-14. Residue His-17 is the Proton acceptor of the active site. Residues Ser-167 and His-194 each contribute to the substrate site. Mn(2+) contacts are provided by His-194 and His-196. Tyr-285 provides a ligand contact to substrate.

Belongs to the 4-hydroxy-2-oxovalerate aldolase family.

The catalysed reaction is (S)-4-hydroxy-2-oxopentanoate = acetaldehyde + pyruvate. This chain is 4-hydroxy-2-oxovalerate aldolase, found in Brevibacillus brevis (strain 47 / JCM 6285 / NBRC 100599).